An 88-amino-acid polypeptide reads, in one-letter code: Small ribosomal subunit protein uS15 (88 aa).

Positions methionine 1 to aspartate 12 are enriched in basic and acidic residues. The disordered stretch occupies residues methionine 1–proline 24.

The protein belongs to the universal ribosomal protein uS15 family. Part of the 30S ribosomal subunit. Forms a bridge to the 50S subunit in the 70S ribosome, contacting the 23S rRNA.

One of the primary rRNA binding proteins, it binds directly to 16S rRNA where it helps nucleate assembly of the platform of the 30S subunit by binding and bridging several RNA helices of the 16S rRNA. Its function is as follows. Forms an intersubunit bridge (bridge B4) with the 23S rRNA of the 50S subunit in the ribosome. This chain is Small ribosomal subunit protein uS15, found in Salinibacter ruber (strain DSM 13855 / M31).